A 321-amino-acid polypeptide reads, in one-letter code: Beta-1,3-N-acetylglucosaminyltransferase manic fringe (321 aa).

Residues 1–7 are Cytoplasmic-facing; that stretch reads MQCRLPR. A helical; Signal-anchor for type II membrane protein membrane pass occupies residues 8 to 27; the sequence is GLAGALLTLLCMGLLCLRYH. Residues 28–321 are Lumenal-facing; it reads LNLSPQRVQE…TPWCPQLGAR (294 aa). Arg70 contributes to the substrate binding site. The N-linked (GlcNAc...) asparagine glycan is linked to Asn109. Intrachain disulfides connect Cys110/Cys121 and Cys139/Cys202. Asp143 lines the substrate pocket. Mn(2+) is bound at residue Asp144. A glycan (N-linked (GlcNAc...) asparagine) is linked at Asn185. Residue Asp232 is part of the active site. His256 is a binding site for Mn(2+). Cys306 and Cys315 are joined by a disulfide.

The protein belongs to the glycosyltransferase 31 family. Mn(2+) serves as cofactor.

Its subcellular location is the golgi apparatus membrane. It catalyses the reaction 3-O-(alpha-L-fucosyl)-L-threonyl-[EGF-like domain protein] + UDP-N-acetyl-alpha-D-glucosamine = 3-O-(N-acetyl-beta-D-glucosaminyl-(1-&gt;3)-alpha-L-fucosyl)-L-threonyl-[EGF-like domain protein] + UDP + H(+). It carries out the reaction 3-O-(alpha-L-fucosyl)-L-seryl-[EGF-like domain protein] + UDP-N-acetyl-alpha-D-glucosamine = 3-O-(N-acetyl-beta-D-glucosaminyl-(1-&gt;3)-alpha-L-fucosyl)-L-seryl-[EGF-like domain protein] + UDP + H(+). Functionally, glycosyltransferase that initiates the elongation of O-linked fucose residues attached to EGF-like repeats in the extracellular domain of Notch molecules. Modulates NOTCH1 activity by modifying O-fucose residues at specific EGF-like domains resulting in inhibition of NOTCH1 activation by JAG1 and enhancement of NOTCH1 activation by DLL1 via an increase in its binding to DLL1. This chain is Beta-1,3-N-acetylglucosaminyltransferase manic fringe (MFNG), found in Pan troglodytes (Chimpanzee).